Here is a 66-residue protein sequence, read N- to C-terminus: Type 3 secretion system chaperone YscE (66 aa).

It belongs to the YscE family. As to quaternary structure, component of the heterodimeric YscE-YscG chaperone. The YscE-YscG chaperone forms a stable ternary complex with YscF/SctF. YscE interacts with YscG, but makes very little direct contact with YscF. Homodimer in solution.

It localises to the cytoplasm. In terms of biological role, chaperone of the type III secretion system (T3SS), also called injectisome, which is used to inject bacterial effector proteins into eukaryotic host cells. Along with YscG, prevents premature polymerization of the YscF/SctF needle protein within the cytoplasm. Is also required for stable expression of cytosolic YscF and for YscF secretion. Likely plays a role in targeting YscF present in the cytosolic YscEFG complex to the T3SS apparatus. Required for Yop secretion. In Yersinia pestis, this protein is Type 3 secretion system chaperone YscE.